The sequence spans 1402 residues: DNA-directed RNA polymerase subunit beta' (1402 aa).

C70, C72, C85, and C88 together coordinate Zn(2+). Positions 460, 462, and 464 each coordinate Mg(2+). 4 residues coordinate Zn(2+): C812, C886, C893, and C896. The tract at residues 1373–1402 (DRFLNGSASSNEKSRSAGVLEATDEESAGD) is disordered.

Belongs to the RNA polymerase beta' chain family. As to quaternary structure, the RNAP catalytic core consists of 2 alpha, 1 beta, 1 beta' and 1 omega subunit. When a sigma factor is associated with the core the holoenzyme is formed, which can initiate transcription. The cofactor is Mg(2+). Zn(2+) serves as cofactor.

The enzyme catalyses RNA(n) + a ribonucleoside 5'-triphosphate = RNA(n+1) + diphosphate. Its function is as follows. DNA-dependent RNA polymerase catalyzes the transcription of DNA into RNA using the four ribonucleoside triphosphates as substrates. The protein is DNA-directed RNA polymerase subunit beta' of Dichelobacter nodosus (strain VCS1703A).